Here is a 676-residue protein sequence, read N- to C-terminus: Envelope glycoprotein (676 aa).

A signal peptide spans 1–34 (MACSTLSKSPKDKIDPRDLLIPLILFLSLKGARS). The interval 35–270 (AAPGSSPHQV…SYQNLGPRIP (236 aa)) is receptor-binding domain (RBD). Residues 35 to 620 (AAPGSSPHQV…FNRSPWFTTL (586 aa)) lie on the Extracellular side of the membrane. N-linked (GlcNAc...) asparagine; by host glycosylation occurs at Asn-46. 5 disulfides stabilise this stretch: Cys-80-Cys-132, Cys-106-Cys-121, Cys-107-Cys-117, Cys-155-Cys-175, and Cys-167-Cys-180. Position 89 (His-89) interacts with Zn(2+). Asp-120 serves as a coordination point for Zn(2+). Asn-202 is a glycosylation site (N-linked (GlcNAc...) asparagine; by host). A disulfide bond links Cys-212 and Cys-218. The segment at 287–321 (NPLPKPAKSPPASSSTPTLISPSPTPTQPPPAGTG) is disordered. Residues 296-308 (PPASSSTPTLISP) are compositionally biased toward low complexity. The span at 309 to 318 (SPTPTQPPPA) shows a compositional bias: pro residues. Residue Asn-336 is glycosylated (N-linked (GlcNAc...) asparagine; by host). 6 disulfide bridges follow: Cys-346–Cys-349, Cys-346–Cys-573, Cys-376–Cys-430, Cys-395–Cys-407, Cys-437–Cys-450, and Cys-565–Cys-572. The CXXC signature appears at 346-349 (CWLC). Asn-368 and Asn-375 each carry an N-linked (GlcNAc...) asparagine; by host glycan. Asn-408 and Asn-444 each carry an N-linked (GlcNAc...) asparagine; by host glycan. Residues 482–502 (VSLTLALLLGGLTMGGIAAGV) form a fusion peptide region. Residues 513–547 (QQFQQLHAAVQDDLKEVEKSITNLEKSLTSLSEVV) are a coiled coil. The tract at residues 548-564 (LQNRRGLDLLFLKEGGL) is immunosuppression. A CX6CC motif is present at residues 565–573 (CAALKEECC). The chain crosses the membrane as a helical span at residues 621–641 (ISTIMGPLIILLLILLFGPCI). Cys-640 is lipidated: S-palmitoyl cysteine; by host. Over 642 to 676 (LNRLVQFVKDRISVVQALVLTQQYHQLKPLEYEPQ) the chain is Cytoplasmic. The short motif at 665–668 (YHQL) is the YXXL motif; contains endocytosis signal element.

The mature envelope protein (Env) consists of a trimer of SU-TM heterodimers attached by a labile interchain disulfide bond. Specific enzymatic cleavages in vivo yield mature proteins. Envelope glycoproteins are synthesized as an inactive precursor that is N-glycosylated and processed likely by host cell furin or by a furin-like protease in the Golgi to yield the mature SU and TM proteins. The cleavage site between SU and TM requires the minimal sequence [KR]-X-[KR]-R. The R-peptide is released from the C-terminus of the cytoplasmic tail of the TM protein upon particle formation as a result of proteolytic cleavage by the viral protease. Cleavage of this peptide is required for TM to become fusogenic. Post-translationally, the CXXC motif is highly conserved across a broad range of retroviral envelope proteins. It is thought to participate in the formation of a labile disulfide bond possibly with the CX6CC motif present in the transmembrane protein. Isomerization of the intersubunit disulfide bond to an SU intrachain disulfide bond is thought to occur upon receptor recognition in order to allow membrane fusion. In terms of processing, the transmembrane protein is palmitoylated. The R-peptide is palmitoylated.

It localises to the virion membrane. Its subcellular location is the host cell membrane. In terms of biological role, the surface protein (SU) attaches the virus to the host cell by binding to its receptor. This interaction triggers the refolding of the transmembrane protein (TM) and is thought to activate its fusogenic potential by unmasking its fusion peptide. Fusion occurs at the host cell plasma membrane. Its function is as follows. The transmembrane protein (TM) acts as a class I viral fusion protein. Under the current model, the protein has at least 3 conformational states: pre-fusion native state, pre-hairpin intermediate state, and post-fusion hairpin state. During viral and target cell membrane fusion, the coiled coil regions (heptad repeats) assume a trimer-of-hairpins structure, positioning the fusion peptide in close proximity to the C-terminal region of the ectodomain. The formation of this structure appears to drive apposition and subsequent fusion of viral and target cell membranes. Membranes fusion leads to delivery of the nucleocapsid into the cytoplasm. This Friend murine leukemia virus (isolate FB29) (FrMLV) protein is Envelope glycoprotein (env).